The following is a 421-amino-acid chain: Cell wall protein ecm33 (421 aa).

A signal peptide spans 1–19 (MLFKSFALTLLFAAARVQA). N-linked (GlcNAc...) asparagine glycans are attached at residues N22, N29, N92, N197, N203, N231, N236, N264, N275, N300, and N324. Positions 365-394 (TSGSATSATGSATTTSYSSDSSASSSSSSS) are disordered. S398 carries the GPI-anchor amidated serine lipid modification. Residues 399–421 (AASNGFTAGALVLGSLLVAALAM) constitute a propeptide, removed in mature form. A helical membrane pass occupies residues 401–421 (SNGFTAGALVLGSLLVAALAM).

The protein belongs to the SPS2 family. In terms of processing, the GPI-anchor is attached to the protein in the endoplasmic reticulum and serves to target the protein to the cell surface. There, the glucosamine-inositol phospholipid moiety is cleaved off and the GPI-modified mannoprotein is covalently attached via its lipidless GPI glycan remnant to the 1,6-beta-glucan of the outer cell wall layer. Post-translationally, extensively N-glycosylated.

The protein resides in the cell membrane. Its subcellular location is the secreted. It localises to the cell wall. Involved in the negative feedback regulation of pmk1 cell integrity signaling and is linked to cellular calcium signaling. This is Cell wall protein ecm33 (ecm33) from Schizosaccharomyces pombe (strain 972 / ATCC 24843) (Fission yeast).